A 373-amino-acid polypeptide reads, in one-letter code: MTKNLLDFDLDGLAAFCEQLGEKRFRAVQLFRWIHQRGASDFARMSDLAKSLREKLSGCAHVAALPVISEHVSADGTVKWLFDVGDGNAVESVFIPEDDRGTLCISSQAGCAVGCRFCSTGHQGFSRNLTSGEIVAQLWFAEHALRARLGTQERVISNVVMMGMGEPLQNYTALVPALRTMLDDHGYGLSRRRLTVSTSGVVPMMDRLSQDCAVAMAVSLHAPNDALRDQLVPLNRKYPLRELLDACTRYLEHAPRDFITFEYCMLDGVNDQPEHARQLIDLVRPRGGEGVRCKFNLIPFNPFPASGLHRSNPQQVAAFAKMLSDAGIVTTVRKTRGDDIDAACGQLAGDVKDRTRAAERMARQRTIVLKPVA.

Glutamate 91 serves as the catalytic Proton acceptor. The Radical SAM core domain maps to 97 to 339; it reads EDDRGTLCIS…TTVRKTRGDD (243 aa). Cysteine 104 and cysteine 344 are joined by a disulfide. Cysteine 111, cysteine 115, and cysteine 118 together coordinate [4Fe-4S] cluster. Residues 165–166, serine 197, 219–221, and asparagine 301 contribute to the S-adenosyl-L-methionine site; these read GE and SLH. Residue cysteine 344 is the S-methylcysteine intermediate of the active site.

The protein belongs to the radical SAM superfamily. RlmN family. [4Fe-4S] cluster is required as a cofactor.

The protein resides in the cytoplasm. The catalysed reaction is adenosine(2503) in 23S rRNA + 2 reduced [2Fe-2S]-[ferredoxin] + 2 S-adenosyl-L-methionine = 2-methyladenosine(2503) in 23S rRNA + 5'-deoxyadenosine + L-methionine + 2 oxidized [2Fe-2S]-[ferredoxin] + S-adenosyl-L-homocysteine. It carries out the reaction adenosine(37) in tRNA + 2 reduced [2Fe-2S]-[ferredoxin] + 2 S-adenosyl-L-methionine = 2-methyladenosine(37) in tRNA + 5'-deoxyadenosine + L-methionine + 2 oxidized [2Fe-2S]-[ferredoxin] + S-adenosyl-L-homocysteine. Functionally, specifically methylates position 2 of adenine 2503 in 23S rRNA and position 2 of adenine 37 in tRNAs. m2A2503 modification seems to play a crucial role in the proofreading step occurring at the peptidyl transferase center and thus would serve to optimize ribosomal fidelity. The protein is Dual-specificity RNA methyltransferase RlmN of Paracidovorax citrulli (strain AAC00-1) (Acidovorax citrulli).